Reading from the N-terminus, the 33-residue chain is Glucagon-2 (33 aa).

This sequence belongs to the glucagon family.

It is found in the secreted. Its function is as follows. Promotes hydrolysis of glycogen and lipids, and raises the blood sugar level. The polypeptide is Glucagon-2 (gcg2) (Oreochromis niloticus (Nile tilapia)).